The primary structure comprises 467 residues: Glutamine synthetase (467 aa).

A GS beta-grasp domain is found at 11-95; it reads HDVKWIDLRF…IVCDIIEPST (85 aa). The region spanning 103–467 is the GS catalytic domain; the sequence is PRAIARRAEE…PLEYDLYYSV (365 aa). Residues Glu-128 and Glu-130 each coordinate Mg(2+). Glu-206 serves as a coordination point for ATP. Glu-211 and Glu-219 together coordinate Mg(2+). L-glutamate-binding positions include 263–264 and Gly-264; that span reads NG. His-268 contacts Mg(2+). Residues 270–272 and Ser-272 each bind ATP; that span reads HMS. 3 residues coordinate L-glutamate: Arg-320, Glu-326, and Arg-338. ATP is bound by residues Arg-338, Arg-343, and Lys-351. Glu-356 provides a ligand contact to Mg(2+). Residue Arg-358 participates in L-glutamate binding. Tyr-396 is modified (O-AMP-tyrosine).

This sequence belongs to the glutamine synthetase family. As to quaternary structure, oligomer of 12 subunits arranged in the form of two hexameric ring. Mg(2+) serves as cofactor.

It localises to the cytoplasm. It catalyses the reaction L-glutamate + NH4(+) + ATP = L-glutamine + ADP + phosphate + H(+). Its activity is regulated as follows. The activity of this enzyme could be controlled by adenylation under conditions of abundant glutamine. Catalyzes the ATP-dependent biosynthesis of glutamine from glutamate and ammonia. This chain is Glutamine synthetase, found in Azotobacter vinelandii.